Reading from the N-terminus, the 373-residue chain is MSSTPHDPFYSSPFGPFYRRHTPYMVQPEYRIYEMNKRLQSRTEDSDNLWWDAFATEFFEDDATLTLSFCLEDGPKRYTIGRTLIPRYFSTVFEGGVTDLYYILKHSKESYHNSSITVDCDQCTMVTQHGKPMFTKVCTEGRLILEFTFDDLMRIKTWHFTIRQYRELVPRSILAMHAQDPQVLDQLSKNITRMGLTNFTLNYLRLCVILEPMQELMSRHKTYNLSPRDCLKTCLFQKWQRMVAPPAEPTRQPTTKRRKRKNSTSSTSNSSAGNNANSTGSKKKTTAANLSLSSQVPDVMVVGEPTLMGGEFGDEDERLITRLENTQYDAANGMDDEEDFNNSPALGNNSPWNSKPPATQETKSENPPPQASQ.

2 disordered regions span residues 244–291 (APPA…ANLS) and 327–373 (QYDA…QASQ). Residues 263-280 (STSSTSNSSAGNNANSTG) show a composition bias toward low complexity. An LIM interaction domain (LID) domain is found at 298–337 (DVMVVGEPTLMGGEFGDEDERLITRLENTQYDAANGMDDE). Residues 341 to 361 (NNSPALGNNSPWNSKPPATQE) show a composition bias toward polar residues.

It belongs to the LDB family. As to quaternary structure, interacts with LHX9. Interacts with SLK; leading to negatively regulate SLK kinase activity. Interacts with LMO4. Ubiquitinated by RLIM/RNF12, leading to its degradation by the proteasome.

The protein resides in the nucleus. Its function is as follows. Transcription cofactor. Binds to the LIM domain of a wide variety of LIM domain-containing transcription factors. This chain is LIM domain-binding protein 2 (LDB2), found in Homo sapiens (Human).